The primary structure comprises 302 residues: 4-hydroxy-tetrahydrodipicolinate synthase (302 aa).

Pyruvate is bound at residue T55. The active-site Proton donor/acceptor is the Y144. The Schiff-base intermediate with substrate role is filled by K172. Residue V214 participates in pyruvate binding.

The protein belongs to the DapA family. Homotetramer; dimer of dimers.

It is found in the cytoplasm. The catalysed reaction is L-aspartate 4-semialdehyde + pyruvate = (2S,4S)-4-hydroxy-2,3,4,5-tetrahydrodipicolinate + H2O + H(+). Its pathway is amino-acid biosynthesis; L-lysine biosynthesis via DAP pathway; (S)-tetrahydrodipicolinate from L-aspartate: step 3/4. In terms of biological role, catalyzes the condensation of (S)-aspartate-beta-semialdehyde [(S)-ASA] and pyruvate to 4-hydroxy-tetrahydrodipicolinate (HTPA). This is 4-hydroxy-tetrahydrodipicolinate synthase from Synechococcus sp. (strain WH7803).